The chain runs to 325 residues: Hydroxylase/desaturase poxK (325 aa).

Residues 1-12 (MTATATPVPTVA) show a composition bias toward low complexity. The tract at residues 1–25 (MTATATPVPTVASHAQDITLPPPPK) is disordered.

It belongs to the asaB hydroxylase/desaturase family.

It participates in secondary metabolite biosynthesis. Functionally, hydroxylase/desaturase; part of the gene cluster that mediates the biosynthesis of oxaleimides, cytotoxic compounds containing an unusual disubstituted succinimide moiety. The first step of the pathway is provided by the HR-PKS poxF that serves in a new mode of collaborative biosynthesis with the PKS-NRPS poxE, by providing the olefin containing amino acid substrate via the synthesis of an ACP-bound dec-4-enoate. The cytochrome P450 monooxygenase poxM-catalyzed oxidation at the alpha-position creates the enzyme-bound 2-hydroxydec-4-enoyl-ACP thioester, which may be prone to spontaneous hydrolysis to yield 2-hydroxydec-4-enoic acid due to increased electrophilicity of the carbonyl. 2-hydroxydec-4-enoic acid can then be further oxidized by poxM to yield the alpha-ketoacid 2-oxodec-4-enoicacid, which is reductively aminated by the aminotransferase poxL to yield (S,E)-2-aminodec-4-enoic acid. The Hybrid PKS-NRPS synthetase poxE then performs condensation between the octaketide product of its PKS modules and the amino group of (S,E)-2-aminodec-4-enoic acid which is activated and incorporated by the adenylation domain. The resulting aminoacyl product can be cyclized by the Diels-Alderase PoxQ and reductively released by the reductive (R) domain of poxE to yield an aldehyde intermediate. The released aldehyde is then substrate for a Knoevenagel condensation by the hydrolyase poxO followed by an oxidation at the 5-position of the pyrrolidone ring. The presence of the olefin from the amino acid building block allows for migration of the substituted allyl group to occur. This allylic transposition reaction takes place in a conjugate addition, semipinacol-like fashion to yield a succinimide intermediate. Iterative two-electron oxidations of the C7 methyl of the succinimide intermediate to the carboxylic acid can be catalyzed by one of two remaining cytochrome P450 monooxygenasess poxC or poxD to yield oxaleimide A. Subsequent oxidation yields the maleimide scaffold oxaleimide I. Both oxaleimide A and oxaleimide I can undergo oxidative modifications in the decalin ring to yield the series of products oxaleimides B to H. The polypeptide is Hydroxylase/desaturase poxK (Penicillium oxalicum).